A 490-amino-acid chain; its full sequence is GTPase Der (490 aa).

EngA-type G domains follow at residues 3–166 (PVVA…MEDL) and 203–376 (IKLA…DSST). GTP-binding positions include 9–16 (GRPNVGKS), 56–60 (DTGGI), 118–121 (NKTD), 209–216 (GRPNVGKS), 256–260 (DTAGV), and 321–324 (NKWD). In terms of domain architecture, KH-like spans 377–461 (RRVGTSMLTR…PIRIQFKEGE (85 aa)).

This sequence belongs to the TRAFAC class TrmE-Era-EngA-EngB-Septin-like GTPase superfamily. EngA (Der) GTPase family. In terms of assembly, associates with the 50S ribosomal subunit.

In terms of biological role, GTPase that plays an essential role in the late steps of ribosome biogenesis. The sequence is that of GTPase Der from Escherichia coli O81 (strain ED1a).